The chain runs to 174 residues: NADH-ubiquinone oxidoreductase chain 6 (174 aa).

The next 6 membrane-spanning stretches (helical) occupy residues 1–21 (MTYALFLLSVSLVMGFVGFSS), 24–44 (SPIYGGLVLIVSGVVGCAIIL), 47–67 (GGGYMGLMVFLIYLGGMMVVF), 86–106 (VEVLVSVLVGLAMEVGLVLWV), 111–131 (GMVVVVNFNSVGSWMIYEGEG), and 151–171 (WLVVVTGWTLFVGVYIVIEIA).

The protein belongs to the complex I subunit 6 family. As to quaternary structure, core subunit of respiratory chain NADH dehydrogenase (Complex I) which is composed of 45 different subunits.

Its subcellular location is the mitochondrion inner membrane. The enzyme catalyses a ubiquinone + NADH + 5 H(+)(in) = a ubiquinol + NAD(+) + 4 H(+)(out). In terms of biological role, core subunit of the mitochondrial membrane respiratory chain NADH dehydrogenase (Complex I) which catalyzes electron transfer from NADH through the respiratory chain, using ubiquinone as an electron acceptor. Essential for the catalytic activity and assembly of complex I. This Pan troglodytes (Chimpanzee) protein is NADH-ubiquinone oxidoreductase chain 6 (MT-ND6).